Consider the following 740-residue polypeptide: F-BAR and double SH3 domains protein 2 (740 aa).

The 275-residue stretch at 8–282 folds into the F-BAR domain; sequence VKVTQELRNI…NSSKVVRDYN (275 aa). A disordered region spans residues 303 to 323; sequence PCDSDTSRQLESETGTTEEHS. Residues 307–323 show a composition bias toward basic and acidic residues; it reads DTSRQLESETGTTEEHS. Residues 356–397 are a coiled coil; it reads GVALSEQSRAELEQKIDEARESIRKAEIIKLKAEARLDLLKQ. SH3 domains lie at 469 to 530 and 567 to 629; these read NYPL…FPTS and ASVC…ELSA. Residues 567-629 form a required and sufficient for location at clathrin-coated pits region; it reads ASVCFVKALY…PSVLVEELSA (63 aa). Residues 629-645 show a composition bias toward polar residues; sequence ASENGDTPWTREIQISP. Positions 629–740 are disordered; sequence ASENGDTPWT…KMEDVEITLV (112 aa). The span at 646-657 shows a compositional bias: pro residues; it reads SPKPHTSLPPLP. Phosphoserine occurs at positions 675 and 681. Residues 675–706 show a composition bias toward polar residues; sequence SQFFPRSPSANENSLHAESPGFSQASRQTPDT.

Homodimer. Interacts (via SH3 domain 2) with ITSN1 (via SH3 domain 4). Recruited to clathrin-coated pits during a mid-to-late stage of assembly via interaction with ITSN1. Interacts (via SH3 domain 1) with WASL. Interacts with WAS. Interacts with CASK and MAGI1. CASK inhibits interaction with MAGI1. Post-translationally, phosphorylated. Phosphorylation on a Ser residue is important for recruitment to the cell membrane and for its role in promoting endocytosis. As to expression, detected in inner ear vestibula and in stereocilia in cochlear hair cell bundles (at protein level). Ubiquitous. Detected in testis, liver, brain cortex, cerebellum, kidney, organ of Corti, utricle, spiral ganglion, tongue and eye.

The protein resides in the cytoplasm. It is found in the cell junction. Its subcellular location is the membrane. It localises to the clathrin-coated pit. The protein localises to the cell membrane. The protein resides in the cell projection. It is found in the stereocilium. Functionally, adapter protein that plays a role in endocytosis via clathrin-coated pits. Contributes to the internalization of cell surface receptors, such as integrin ITGB1 and transferrin receptor. Promotes endocytosis of EGFR in cancer cells, and thereby contributes to the down-regulation of EGFR signaling. Recruited to clathrin-coated pits during a mid-to-late stage of assembly, where it is required for normal progress from U-shaped intermediate stage pits to terminal, omega-shaped pits. Binds to membranes enriched in phosphatidylinositol 3,4-bisphosphate or phosphatidylinositol 3,4,5-trisphosphate. When bound to membranes, promotes actin polymerization via its interaction with WAS and/or WASL which leads to the activation of the Arp2/3 complex. Does not promote actin polymerisation in the absence of membranes. This Mus musculus (Mouse) protein is F-BAR and double SH3 domains protein 2 (Fchsd2).